Here is a 554-residue protein sequence, read N- to C-terminus: MKLLKDSGAALLALFFVLVYLLPVNSRLLWQPDETRYAEISREMLQRGDWVVPYFMDIRYFEKPVAGYWFNNISQWIFGDSNFAVRFGSIFSTALSAVLVYWLATLLWRNRSTSVLATLIYLSFLLVFGIGTYAVLDPMISLWLTAAMVSFYLTLKAENWQQKVGAYALLGVACGMGFMTKGFLALAVPVIAVLPIVIQQKRIKDLVVFGPIAIVCAVLLSLPWALAIAQREPDFWNYFFWVEHIQRFAEASAQHKSPIWYYLPILCIGVLPWLGLLPGALFKGWRERATKPELFFLLSWVVMPLLFFSVAKGKLPTYILPCMAPLSLLMAAYATDCANNIRMRALKINGVINLLFGVACALVIVVIGLGLVKDIVAYGPQENQKVWLGVLAFAGWGVTGFITLRNNARNWRWAAACPLLFILLVGYLIPQQVVDSKQPQNFIKNNFSELSSSRYVLTDSVGVAAGLAWELKRSDILMFSEKGELTYGLAYPDSQDNYISNDDFPTWLAQARKEGDVSLVVQLAKNEALPAHLPPADKVNLMNRLALLWYQKTP.

Helical transmembrane passes span 4–24 (LKDS…LLPV), 87–107 (FGSI…ATLL), 115–135 (VLAT…TYAV), 178–198 (FMTK…PIVI), 206–226 (LVVF…PWAL), 262–282 (YLPI…GALF), 293–313 (ELFF…VAKG), 315–335 (LPTY…AYAT), 351–371 (VINL…GLGL), 384–404 (QKVW…FITL), and 414–434 (AAAC…QQVV).

This sequence belongs to the glycosyltransferase 83 family.

It is found in the cell inner membrane. The enzyme catalyses 4-amino-4-deoxy-alpha-L-arabinopyranosyl di-trans,octa-cis-undecaprenyl phosphate + lipid IVA = lipid IIA + di-trans,octa-cis-undecaprenyl phosphate.. The protein operates within lipopolysaccharide metabolism; 4-amino-4-deoxy-beta-L-arabinose-lipid A biosynthesis. In terms of biological role, catalyzes the transfer of the L-Ara4N moiety of the glycolipid undecaprenyl phosphate-alpha-L-Ara4N to lipid A. The modified arabinose is attached to lipid A and is required for resistance to polymyxin and cationic antimicrobial peptides. This Yersinia pseudotuberculosis serotype O:1b (strain IP 31758) protein is Undecaprenyl phosphate-alpha-4-amino-4-deoxy-L-arabinose arabinosyl transferase.